Here is a 147-residue protein sequence, read N- to C-terminus: MSTYHPKSGDITRKWYVIDATDVVLGRLATHAADLLRGKGKPQFAPNVDCGDHVIVINADKVHVSSNKREREMRYRHSGYPGGLKTMTLGRSLEVHPERVVEESIRGMMPHNRLSRASVKKLHVFAGSEHPYAAQKPETYEFKQVAQ.

It belongs to the universal ribosomal protein uL13 family. Part of the 50S ribosomal subunit.

Its function is as follows. This protein is one of the early assembly proteins of the 50S ribosomal subunit, although it is not seen to bind rRNA by itself. It is important during the early stages of 50S assembly. This Corynebacterium diphtheriae (strain ATCC 700971 / NCTC 13129 / Biotype gravis) protein is Large ribosomal subunit protein uL13.